The sequence spans 359 residues: Probable S-adenosylmethionine-dependent methyltransferase At5g38100 (359 aa).

S-adenosyl-L-homocysteine-binding residues include tyrosine 19, cysteine 63, asparagine 68, aspartate 104, serine 133, and phenylalanine 134. Mg(2+) contacts are provided by asparagine 172, aspartate 258, and phenylalanine 260.

This sequence belongs to the methyltransferase superfamily. Type-7 methyltransferase family. Homodimer. Mg(2+) is required as a cofactor.

The chain is Probable S-adenosylmethionine-dependent methyltransferase At5g38100 from Arabidopsis thaliana (Mouse-ear cress).